Consider the following 251-residue polypeptide: Protein TK1472 (251 aa).

This sequence belongs to the CinA family.

The polypeptide is Protein TK1472 (Thermococcus kodakarensis (strain ATCC BAA-918 / JCM 12380 / KOD1) (Pyrococcus kodakaraensis (strain KOD1))).